A 481-amino-acid chain; its full sequence is Aromatic amino acid aminotransferase DDB_G0272014 (481 aa).

An N6-(pyridoxal phosphate)lysine modification is found at Lys300.

The protein belongs to the class-I pyridoxal-phosphate-dependent aminotransferase family. Pyridoxal 5'-phosphate is required as a cofactor.

Its subcellular location is the cytoplasm. It catalyses the reaction an aromatic L-alpha-amino acid + 2-oxoglutarate = an aromatic oxo-acid + L-glutamate. In terms of biological role, has aromatic amino acid transaminase activity. The chain is Aromatic amino acid aminotransferase DDB_G0272014 from Dictyostelium discoideum (Social amoeba).